Reading from the N-terminus, the 1513-residue chain is DNA-directed RNA polymerase subunit beta'' (1513 aa).

The Zn(2+) site is built by Cys-220, Cys-296, Cys-303, and Cys-306. Residues 644–769 form a disordered region; it reads RTREKDSENE…EYGNPEEDSV (126 aa). A compositionally biased stretch (basic and acidic residues) spans 659-679; the sequence is NEYRTREEECKTLEDEYRTRE. The segment covering 680–707 has biased composition (acidic residues); the sequence is EEYETLEDEYGIPENEYETLEDEYGILE. Residues 726–737 show a composition bias toward basic and acidic residues; sequence NKYRPREDKYGT. A compositionally biased stretch (acidic residues) spans 738–767; it reads LEEDSEDEHGTLEEDSEEDSEDEYGNPEED.

Belongs to the RNA polymerase beta' chain family. RpoC2 subfamily. In plastids the minimal PEP RNA polymerase catalytic core is composed of four subunits: alpha, beta, beta', and beta''. When a (nuclear-encoded) sigma factor is associated with the core the holoenzyme is formed, which can initiate transcription. It depends on Zn(2+) as a cofactor.

Its subcellular location is the plastid. It localises to the chloroplast. The enzyme catalyses RNA(n) + a ribonucleoside 5'-triphosphate = RNA(n+1) + diphosphate. DNA-dependent RNA polymerase catalyzes the transcription of DNA into RNA using the four ribonucleoside triphosphates as substrates. The polypeptide is DNA-directed RNA polymerase subunit beta'' (Oryza sativa (Rice)).